Consider the following 336-residue polypeptide: 3-isopropylmalate dehydrogenase (336 aa).

Substrate is bound by residues Arg87, Arg97, Arg121, and Asp211. Mg(2+) is bound by residues Asp211, Asp235, and Asp239. 271 to 283 (GSAPDIAGQGVAD) serves as a coordination point for NAD(+).

This sequence belongs to the isocitrate and isopropylmalate dehydrogenases family. LeuB type 2 subfamily. Homodimer. Mg(2+) is required as a cofactor. Mn(2+) serves as cofactor.

It is found in the cytoplasm. It catalyses the reaction (2R,3S)-3-isopropylmalate + NAD(+) = 4-methyl-2-oxopentanoate + CO2 + NADH. It functions in the pathway amino-acid biosynthesis; L-leucine biosynthesis; L-leucine from 3-methyl-2-oxobutanoate: step 3/4. Catalyzes the oxidation of 3-carboxy-2-hydroxy-4-methylpentanoate (3-isopropylmalate) to 3-carboxy-4-methyl-2-oxopentanoate. The product decarboxylates to 4-methyl-2 oxopentanoate. In Mycobacterium avium (strain 104), this protein is 3-isopropylmalate dehydrogenase.